A 435-amino-acid chain; its full sequence is Flavonol 7-O-rhamnosyltransferase (435 aa).

A UDP-binding site is contributed by glutamine 18. Position 18 (glutamine 18) interacts with UDP-beta-L-rhamnose. The Proton acceptor role is filled by histidine 21. Histidine 21 contacts quercetin. The active-site Charge relay is the aspartate 119. UDP is bound by residues serine 250, alanine 315, histidine 332, glycine 336, serine 337, and glutamate 340. Residues serine 250, alanine 315, histidine 332, glycine 336, serine 337, and glutamate 340 each contribute to the UDP-beta-L-rhamnose site.

The protein belongs to the UDP-glycosyltransferase family. As to expression, highly expressed in floral buds. Expressed in stems, leaves and flowers. Expressed at low levels in roots and siliques. Expressed on the adaxial side of cotyledons and emerging leaves, in trichomes, root columella cells, and the late elongation/early differentiation zone of roots.

It catalyses the reaction quercitrin + UDP-beta-L-rhamnose = quercetin 3,7-bis-O-alpha-L-rhamnoside + UDP + H(+). The catalysed reaction is quercetin 3-O-beta-D-glucoside + UDP-beta-L-rhamnose = quercetin 3-O-beta-D-glucoside-7-O-alpha-L-rhamnoside + UDP + H(+). The protein operates within flavonoid metabolism. Functionally, flavonol 7-O-rhamnosyltransferase that catalyzes the transfer of rhamnose from UDP-rhamnose to the 7-OH position of 3-O-glycosylated flavonols, such as kaempferol 3-O-rhamnoside, kaempferol 3-O-glucoside, quercetin 3-O-glucoside, quercetin 3-O-galactoside, quercetin 3-O-rhamnoside and isorhamnetin 3-O-glucoside. Is able to glycosylate the flavonols quercetin and kaempferol to yield quercetin 7-O-rhamnoside and kaempferol 7-O-rhamnoside. Shows a strict specificity for UDP-rhamnose as sugar donor. Does not act on 3-O-glycosylated anthocyanins. The accumulation of kaempferol 3-O-rhamnoside-7-O-rhamnoside inhibits basipetal auxin transport, which influences auxin distribution and plant organ development. The sequence is that of Flavonol 7-O-rhamnosyltransferase from Arabidopsis thaliana (Mouse-ear cress).